Reading from the N-terminus, the 986-residue chain is Regulator of telomere elongation helicase 1 homolog (986 aa).

One can recognise a Helicase ATP-binding domain in the interval 7 to 326 (AGIPVHFPFE…KEMLLELEKA (320 aa)). 42-49 (SPTGTGKT) lines the ATP pocket. Residues C148, C166, C175, and C211 each coordinate [4Fe-4S] cluster. Residues 254–257 (DEGH) carry the DEAH box motif. T875 bears the Phosphothreonine mark.

The protein belongs to the helicase family. RAD3/XPD subfamily.

The protein localises to the nucleus. It catalyses the reaction ATP + H2O = ADP + phosphate + H(+). In terms of biological role, a probable ATP-dependent DNA helicase implicated in DNA repair and the maintenance of genomic stability. Acts as an anti-recombinase to counteract toxic recombination and limit crossover during meiosis. Regulates meiotic recombination and crossover homeostasis by physically dissociating strand invasion events and thereby promotes noncrossover repair by meiotic synthesis dependent strand annealing (SDSA) as well as disassembly of D loop recombination intermediates. This Drosophila grimshawi (Hawaiian fruit fly) protein is Regulator of telomere elongation helicase 1 homolog.